A 293-amino-acid chain; its full sequence is Shikimate dehydrogenase (NADP(+)) (293 aa).

Residues 20–22 (SLT) and Thr72 contribute to the shikimate site. Lys76 functions as the Proton acceptor in the catalytic mechanism. Shikimate contacts are provided by Asn97 and Asp112. Residues 136 to 140 (GAGGA) and Ile230 contribute to the NADP(+) site. Shikimate is bound at residue Tyr232. Gly253 contributes to the NADP(+) binding site.

Belongs to the shikimate dehydrogenase family. Homodimer.

The enzyme catalyses shikimate + NADP(+) = 3-dehydroshikimate + NADPH + H(+). It functions in the pathway metabolic intermediate biosynthesis; chorismate biosynthesis; chorismate from D-erythrose 4-phosphate and phosphoenolpyruvate: step 4/7. Involved in the biosynthesis of the chorismate, which leads to the biosynthesis of aromatic amino acids. Catalyzes the reversible NADPH linked reduction of 3-dehydroshikimate (DHSA) to yield shikimate (SA). The chain is Shikimate dehydrogenase (NADP(+)) from Arthrobacter sp. (strain FB24).